The chain runs to 286 residues: 2-hydroxy-6-oxo-6-phenylhexa-2,4-dienoate hydrolase (286 aa).

Substrate is bound by residues 42-43 (GG), Asn51, Lys111, Ser180, and Arg190. The AB hydrolase-1 domain maps to 173 to 271 (NVFLFDQSLI…RCVHWAQWEH (99 aa)). The active-site Proton acceptor is His265. Trp266 provides a ligand contact to substrate.

Belongs to the AB hydrolase superfamily. BphD family. In terms of assembly, homodimer.

It catalyses the reaction 2,6-dioxo-6-phenylhexa-3-enoate + H2O = 2-oxopent-4-enoate + benzoate + H(+). Its pathway is xenobiotic degradation; biphenyl degradation; 2-hydroxy-2,4-pentadienoate and benzoate from biphenyl: step 4/4. In terms of biological role, catalyzes an unusual C-C bond hydrolysis of 2-hydroxy-6-oxo-6-phenylhexa-2,4-dienoic acid (HOPDA) to produce benzoic acid and 2-hydroxy-2,4-pentadienoic acid (HPD). The sequence is that of 2-hydroxy-6-oxo-6-phenylhexa-2,4-dienoate hydrolase from Delftia acidovorans (Pseudomonas acidovorans).